Consider the following 285-residue polypeptide: Ribosomal RNA small subunit methyltransferase A (285 aa).

S-adenosyl-L-methionine contacts are provided by Asn-29, Leu-31, Gly-56, Glu-77, Asp-102, and Asn-123.

It belongs to the class I-like SAM-binding methyltransferase superfamily. rRNA adenine N(6)-methyltransferase family. RsmA subfamily.

It localises to the cytoplasm. It carries out the reaction adenosine(1518)/adenosine(1519) in 16S rRNA + 4 S-adenosyl-L-methionine = N(6)-dimethyladenosine(1518)/N(6)-dimethyladenosine(1519) in 16S rRNA + 4 S-adenosyl-L-homocysteine + 4 H(+). In terms of biological role, specifically dimethylates two adjacent adenosines (A1518 and A1519) in the loop of a conserved hairpin near the 3'-end of 16S rRNA in the 30S particle. May play a critical role in biogenesis of 30S subunits. The sequence is that of Ribosomal RNA small subunit methyltransferase A from Clostridium perfringens (strain ATCC 13124 / DSM 756 / JCM 1290 / NCIMB 6125 / NCTC 8237 / Type A).